A 126-amino-acid polypeptide reads, in one-letter code: Adenosine 5'-monophosphoramidase HINT1 (126 aa).

Residue A2 is modified to N-acetylalanine. Positions 18 to 126 (IFGKIIRKEI…GGRQMNWPPG (109 aa)) constitute an HIT domain. An N6-acetyllysine mark is found at K21 and K30. 43–44 (DI) contacts AMP. Phosphoserine occurs at positions 45 and 72. AMP-binding positions include N99, 105-107 (GQS), and 112-114 (HLH). Positions 110-114 (HVHLH) match the Histidine triad motif motif. The active-site Tele-AMP-histidine intermediate is the H112.

This sequence belongs to the HINT family. In terms of assembly, homodimer. Interacts with CDK7. Interacts with RUVBL1 and RUVBL2 and is associated with the LEF1/TCF1-CTNNB1 complex and with a KAT5 histone acetyltransferase complex. Identified in a complex with MITF and CTNNB1. Interacts with CDC34 and RBX1, and is part of a SCF (SKP2-CUL1-F-box protein) E3 ubiquitin-protein ligase complex. Interacts with SUMO1, SUMO2 and RGS17. Interacts with the Ten-1 ICD form of TENM1. Interacts with CALM1; interaction increases in the presence of calcium ions. As to expression, widely expressed.

Its subcellular location is the cytoplasm. It localises to the nucleus. The enzyme catalyses adenosine 5'-phosphoramidate + H2O = AMP + NH4(+). Exhibits adenosine 5'-monophosphoramidase activity, hydrolyzing purine nucleotide phosphoramidates with a single phosphate group such as adenosine 5'monophosphoramidate (AMP-NH2) to yield AMP and NH2. Hydrolyzes adenosine 5'monophosphomorpholidate (AMP-morpholidate) and guanosine 5'monophosphomorpholidate (GMP-morpholidate). Hydrolyzes lysyl-AMP (AMP-N-epsilon-(N-alpha-acetyl lysine methyl ester)) generated by lysine tRNA ligase, as well as Met-AMP, His-AMP and Asp-AMP, lysyl-GMP (GMP-N-epsilon-(N-alpha-acetyl lysine methyl ester)) and AMP-N-alanine methyl ester. Can also convert adenosine 5'-O-phosphorothioate and guanosine 5'-O-phosphorothioate to the corresponding nucleoside 5'-O-phosphates with concomitant release of hydrogen sulfide. In addition, functions as a scaffolding protein that modulates transcriptional activation by the LEF1/TCF1-CTNNB1 complex and by the complex formed with MITF and CTNNB1. Modulates p53/TP53 levels and p53/TP53-mediated apoptosis. Modulates proteasomal degradation of target proteins by the SCF (SKP2-CUL1-F-box protein) E3 ubiquitin-protein ligase complex. Also exhibits SUMO-specific isopeptidase activity, deconjugating SUMO1 from RANGAP1 and RGS17. This chain is Adenosine 5'-monophosphoramidase HINT1 (HINT1), found in Bos taurus (Bovine).